A 377-amino-acid chain; its full sequence is D-alanine--D-alanine ligase (377 aa).

The region spanning 141–347 (KRILNQAGIR…YSELIDRLIQ (207 aa)) is the ATP-grasp domain. 171 to 226 (KEELGDLVFVKPAKQGSSVGIHKVDTEEEYETAMKDAFTYDYKVLVEAGIKNPREI) provides a ligand contact to ATP. Positions 301, 314, and 316 each coordinate Mg(2+).

The protein belongs to the D-alanine--D-alanine ligase family. Mg(2+) serves as cofactor. It depends on Mn(2+) as a cofactor.

The protein localises to the cytoplasm. It catalyses the reaction 2 D-alanine + ATP = D-alanyl-D-alanine + ADP + phosphate + H(+). Its pathway is cell wall biogenesis; peptidoglycan biosynthesis. Its function is as follows. Cell wall formation. The polypeptide is D-alanine--D-alanine ligase (Limosilactobacillus fermentum (strain NBRC 3956 / LMG 18251) (Lactobacillus fermentum)).